A 253-amino-acid polypeptide reads, in one-letter code: 3-deoxy-manno-octulosonate cytidylyltransferase (253 aa).

The protein belongs to the KdsB family.

The protein localises to the cytoplasm. The catalysed reaction is 3-deoxy-alpha-D-manno-oct-2-ulosonate + CTP = CMP-3-deoxy-beta-D-manno-octulosonate + diphosphate. It functions in the pathway nucleotide-sugar biosynthesis; CMP-3-deoxy-D-manno-octulosonate biosynthesis; CMP-3-deoxy-D-manno-octulosonate from 3-deoxy-D-manno-octulosonate and CTP: step 1/1. Its pathway is bacterial outer membrane biogenesis; lipopolysaccharide biosynthesis. Its function is as follows. Activates KDO (a required 8-carbon sugar) for incorporation into bacterial lipopolysaccharide in Gram-negative bacteria. The protein is 3-deoxy-manno-octulosonate cytidylyltransferase of Acinetobacter baumannii (strain AYE).